Reading from the N-terminus, the 426-residue chain is Serine--tRNA ligase (426 aa).

Residue 235–237 (TAE) coordinates L-serine. 266 to 268 (RRE) contacts ATP. Glu289 contacts L-serine. 353-356 (EISS) provides a ligand contact to ATP. Ser389 contacts L-serine.

This sequence belongs to the class-II aminoacyl-tRNA synthetase family. Type-1 seryl-tRNA synthetase subfamily. In terms of assembly, homodimer. The tRNA molecule binds across the dimer.

It is found in the cytoplasm. The catalysed reaction is tRNA(Ser) + L-serine + ATP = L-seryl-tRNA(Ser) + AMP + diphosphate + H(+). It carries out the reaction tRNA(Sec) + L-serine + ATP = L-seryl-tRNA(Sec) + AMP + diphosphate + H(+). Its pathway is aminoacyl-tRNA biosynthesis; selenocysteinyl-tRNA(Sec) biosynthesis; L-seryl-tRNA(Sec) from L-serine and tRNA(Sec): step 1/1. In terms of biological role, catalyzes the attachment of serine to tRNA(Ser). Is also able to aminoacylate tRNA(Sec) with serine, to form the misacylated tRNA L-seryl-tRNA(Sec), which will be further converted into selenocysteinyl-tRNA(Sec). This chain is Serine--tRNA ligase, found in Nostoc punctiforme (strain ATCC 29133 / PCC 73102).